The following is a 398-amino-acid chain: Elongation factor Tu (398 aa).

The region spanning 10–207 (KPHVNIGTIG…TVDSYIPEPE (198 aa)) is the tr-type G domain. The interval 19–26 (GHVDHGKT) is G1. 19–26 (GHVDHGKT) contacts GTP. Thr-26 contacts Mg(2+). The interval 63–67 (GITIN) is G2. Positions 84 to 87 (DAPG) are G3. Residues 84 to 88 (DAPGH) and 139 to 142 (NKVD) each bind GTP. The interval 139–142 (NKVD) is G4. Positions 177–179 (SAL) are G5.

The protein belongs to the TRAFAC class translation factor GTPase superfamily. Classic translation factor GTPase family. EF-Tu/EF-1A subfamily. As to quaternary structure, monomer.

It is found in the cytoplasm. The enzyme catalyses GTP + H2O = GDP + phosphate + H(+). GTP hydrolase that promotes the GTP-dependent binding of aminoacyl-tRNA to the A-site of ribosomes during protein biosynthesis. The protein is Elongation factor Tu of Streptococcus pyogenes serotype M1.